Consider the following 118-residue polypeptide: Large ribosomal subunit protein bL12 (118 aa).

The residue at position 1 (M1) is an N-acetylmethionine; in form MA2.

The protein belongs to the bacterial ribosomal protein bL12 family. Homodimer. Part of the ribosomal stalk of the 50S ribosomal subunit. Forms a multimeric L10(L12)X complex, where L10 forms an elongated spine to which 2 to 4 L12 dimers bind in a sequential fashion. Binds GTP-bound translation factors. Acetylation of Met-1 converts MA1 to MA2.

Its function is as follows. Forms part of the ribosomal stalk which helps the ribosome interact with GTP-bound translation factors. Is thus essential for accurate translation. The sequence is that of Large ribosomal subunit protein bL12 from Micrococcus luteus (Micrococcus lysodeikticus).